Here is a 130-residue protein sequence, read N- to C-terminus: Mini-ribonuclease 3 (130 aa).

D19 is an active-site residue. Residues 69 to 91 (EQDVVRRGRNAKGHGAPKSADPA) are disordered.

The protein belongs to the MrnC RNase family. Homodimer. Requires Mg(2+) as cofactor.

The protein localises to the cytoplasm. Its function is as follows. Involved in correct processing of both the 5' and 3' ends of 23S rRNA precursor. Processes 30S rRNA precursor transcript even in absence of ribonuclease 3 (Rnc); Rnc processes 30S rRNA into smaller rRNA precursors. This Symbiobacterium thermophilum (strain DSM 24528 / JCM 14929 / IAM 14863 / T) protein is Mini-ribonuclease 3.